The following is a 302-amino-acid chain: MSKQAAVIELGYMGISVKDPDAWKSFATDMLGLQVLDEGEKDRFYLRMDYWHHRIVVHHNGQDDLEYLGWRVAGKPEFEALGQKLIDAGYKIRICDKVEAQERMVLGLMKTEDPGGNPTEIFWGPRIDMSNPFHPGRPLHGKFVTGDQGLGHCIVRQTDVAEAHKFYSLLGFRGDVEYRIPLPNGMTAELSFMHCNARDHSIAFGAMPAAKRLNHLMLEYTHMEDLGYTHQQFVKNEIDIALQLGIHANDKALTFYGATPSGWLIEPGWRGATAIDEAEYYVGDIFGHGVEATGYGLDVKLS.

2 VOC domains span residues E9–G124 and G149–R270. H152 serves as a coordination point for Fe cation. Residues H152, D199–H200, H215, and Y256 contribute to the substrate site. H215 contacts Fe cation. Fe cation is bound at residue E266.

It belongs to the extradiol ring-cleavage dioxygenase family. Requires Fe(2+) as cofactor.

It catalyses the reaction naphthalene-1,2-diol + O2 = 2-hydroxychromene-2-carboxylate + H(+). The protein operates within aromatic compound metabolism; naphthalene degradation. In terms of biological role, involved in the naphthalene catabolic pathway. Catalyzes the meta-cleavage of 1,2-dihydroxynaphthalene (1,2-DHN) to yield 2-hydroxychromene-2-carboxylic acid. The sequence is that of 1,2-dihydroxynaphthalene dioxygenase (nahC) from Pseudomonas putida (Arthrobacter siderocapsulatus).